A 503-amino-acid polypeptide reads, in one-letter code: uncharacterized protein (503 aa).

Disordered regions lie at residues Met-1–Thr-26 and Asp-132–Met-156. Low complexity predominate over residues Ala-16–Thr-26. A compositionally biased stretch (polar residues) spans Thr-147–Met-156.

This is an uncharacterized protein from Caenorhabditis elegans.